We begin with the raw amino-acid sequence, 181 residues long: Acireductone dioxygenase (181 aa).

The Fe(2+) site is built by H100, H102, E106, and H145. Ni(2+)-binding residues include H100, H102, E106, and H145.

Belongs to the acireductone dioxygenase (ARD) family. Monomer. The cofactor is Fe(2+). Ni(2+) is required as a cofactor.

The catalysed reaction is 1,2-dihydroxy-5-(methylsulfanyl)pent-1-en-3-one + O2 = 3-(methylsulfanyl)propanoate + CO + formate + 2 H(+). It catalyses the reaction 1,2-dihydroxy-5-(methylsulfanyl)pent-1-en-3-one + O2 = 4-methylsulfanyl-2-oxobutanoate + formate + 2 H(+). The protein operates within amino-acid biosynthesis; L-methionine biosynthesis via salvage pathway; L-methionine from S-methyl-5-thio-alpha-D-ribose 1-phosphate: step 5/6. Functionally, catalyzes 2 different reactions between oxygen and the acireductone 1,2-dihydroxy-3-keto-5-methylthiopentene (DHK-MTPene) depending upon the metal bound in the active site. Fe-containing acireductone dioxygenase (Fe-ARD) produces formate and 2-keto-4-methylthiobutyrate (KMTB), the alpha-ketoacid precursor of methionine in the methionine recycle pathway. Ni-containing acireductone dioxygenase (Ni-ARD) produces methylthiopropionate, carbon monoxide and formate, and does not lie on the methionine recycle pathway. This chain is Acireductone dioxygenase, found in Trichodesmium erythraeum (strain IMS101).